The sequence spans 125 residues: MAAGVRQSRGTAARKVGRRAEVIAALWLMAKGYRILGFRLATPLGEIDLLAQRGKVLAVVEVKQRTTIEDALDAVKPTQRERLRRAATHLAAHRAGLRDLLVRLDLIAMAPGRPPRHLPDAWGGA.

It belongs to the UPF0102 family.

The protein is UPF0102 protein CCNA_00142 of Caulobacter vibrioides (strain NA1000 / CB15N) (Caulobacter crescentus).